A 245-amino-acid polypeptide reads, in one-letter code: Zinc finger protein AZF1 (245 aa).

Residues 1–15 (MALETLNSPTATTTA) are compositionally biased toward polar residues. Disordered regions lie at residues 1-57 (MALE…NKNL) and 112-141 (LGGH…SHSN). The C2H2-type 1 zinc-finger motif lies at 97–119 (YKCTVCGKSFSSYQALGGHKTSH). Positions 123 to 134 (TNTSITSGNQEL) are enriched in polar residues. The segment at 164 to 186 (HTCSICFKSFASGQALGGHKRCH) adopts a C2H2-type 2 zinc-finger fold. Residues 193–231 (GNGNGSSSNSVELVAGSDVSDVDNERWSEESAIGGHRGF) form a disordered region.

In terms of tissue distribution, highly expressed in roots and at lower levels in leaves and stems.

Its subcellular location is the nucleus. Functionally, transcriptional repressor involved in the inhibition of plant growth under abiotic stress conditions. Can repress the expression of various genes, including osmotic stress and abscisic acid-repressive genes and auxin-inducible genes, by binding to their promoter regions in a DNA sequence-specific manner. This Arabidopsis thaliana (Mouse-ear cress) protein is Zinc finger protein AZF1 (AZF1).